Reading from the N-terminus, the 229-residue chain is Lipoprotein-releasing system ATP-binding protein LolD (229 aa).

Positions 9 to 229 constitute an ABC transporter domain; sequence LRLEQVARRY…TIREGQIVPA (221 aa). 45–52 contributes to the ATP binding site; the sequence is APSGTGKS.

The protein belongs to the ABC transporter superfamily. Lipoprotein translocase (TC 3.A.1.125) family. As to quaternary structure, the complex is composed of two ATP-binding proteins (LolD) and two transmembrane proteins (LolC and LolE).

Its subcellular location is the cell inner membrane. Its function is as follows. Part of the ABC transporter complex LolCDE involved in the translocation of mature outer membrane-directed lipoproteins, from the inner membrane to the periplasmic chaperone, LolA. Responsible for the formation of the LolA-lipoprotein complex in an ATP-dependent manner. This is Lipoprotein-releasing system ATP-binding protein LolD from Granulibacter bethesdensis (strain ATCC BAA-1260 / CGDNIH1).